A 256-amino-acid polypeptide reads, in one-letter code: Gamma carbonic anhydrase-like 2, mitochondrial (256 aa).

The transit peptide at 1–33 (MATSLARISKRSITSAVSSNLIRRYFAAEAVAV) directs the protein to the mitochondrion. Substrate is bound by residues 103–105 (RGD) and 118–119 (QE). His-124 lines the Zn(2+) pocket. Substrate is bound by residues Arg-152, Gln-164, and Tyr-231.

This sequence belongs to the gamma-class carbonic anhydrase family. As to quaternary structure, component of the mitochondrial oxidoreductase respiratory chain complex I; element of the extra matrix-exposed domain, which is attached to the membrane arm of this complex. Interacts with GAMMACA2.

The protein resides in the mitochondrion membrane. Functionally, involved in complex I assembly in mitochondria and respiration. The chain is Gamma carbonic anhydrase-like 2, mitochondrial (GAMMACAL2) from Arabidopsis thaliana (Mouse-ear cress).